The primary structure comprises 374 residues: Chaperone protein DnaJ (374 aa).

The J domain maps to 5-70; the sequence is DYYKLLGVDR…EKRAGYDRYG (66 aa). The CR-type zinc finger occupies 136–214; that stretch reads GIQAPIHYVT…CNGSGRRRDE (79 aa). Zn(2+)-binding residues include C149, C152, C166, C169, C188, C191, C202, and C205. CXXCXGXG motif repeat units lie at residues 149–156, 166–173, 188–195, and 202–209; these read CDMCQGRG, CHTCQGSG, CTTCYGEG, and CKKCNGSG.

Belongs to the DnaJ family. As to quaternary structure, homodimer. Requires Zn(2+) as cofactor.

The protein localises to the cytoplasm. In terms of biological role, participates actively in the response to hyperosmotic and heat shock by preventing the aggregation of stress-denatured proteins and by disaggregating proteins, also in an autonomous, DnaK-independent fashion. Unfolded proteins bind initially to DnaJ; upon interaction with the DnaJ-bound protein, DnaK hydrolyzes its bound ATP, resulting in the formation of a stable complex. GrpE releases ADP from DnaK; ATP binding to DnaK triggers the release of the substrate protein, thus completing the reaction cycle. Several rounds of ATP-dependent interactions between DnaJ, DnaK and GrpE are required for fully efficient folding. Also involved, together with DnaK and GrpE, in the DNA replication of plasmids through activation of initiation proteins. The polypeptide is Chaperone protein DnaJ (Wolbachia sp. subsp. Brugia malayi (strain TRS)).